The following is a 388-amino-acid chain: MNLHEYQAKQLFARYGLPAPVGYACTTPREAEEAASKIGAGPWVVKCQVHAGGRGKAGGVKVVNSKEDIRAFAENWLGKRLVTYQTDANGQPVNQILVEAATDIAKELYLGAVVDRSSRRVVFMASTEGGVEIEKVAEETPQLIHKVALDPLTGPMPYQGRELAFKLGLEGKLVQQFTKIFMGLATIFLERDLALIEINPLVITKQGDLICLDGKLGADGNALFRQLDLREMRDQSQEDPREAQAAQWELNYVALDGNIGCMVNGAGLAMGTMDIVKLHGGEPANFLDVGGGATKERVTEAFKIILSDDKVKVVLVNIFGGIVRCDLIADGIIGAVAEVGVNVPVVVRLEGNNAELGAKKLADSGLNIIAAKGLTDAAQQVVAAVEGK.

The 236-residue stretch at 9-244 (KQLFARYGLP…QSQEDPREAQ (236 aa)) folds into the ATP-grasp domain. ATP is bound by residues Lys46, 53-55 (GRG), Glu99, Thr102, and Glu107. 2 residues coordinate Mg(2+): Asn199 and Asp213. Substrate is bound by residues Asn264 and 321–323 (GIV).

It belongs to the succinate/malate CoA ligase beta subunit family. As to quaternary structure, heterotetramer of two alpha and two beta subunits. Mg(2+) is required as a cofactor.

It catalyses the reaction succinate + ATP + CoA = succinyl-CoA + ADP + phosphate. The enzyme catalyses GTP + succinate + CoA = succinyl-CoA + GDP + phosphate. Its pathway is carbohydrate metabolism; tricarboxylic acid cycle; succinate from succinyl-CoA (ligase route): step 1/1. In terms of biological role, succinyl-CoA synthetase functions in the citric acid cycle (TCA), coupling the hydrolysis of succinyl-CoA to the synthesis of either ATP or GTP and thus represents the only step of substrate-level phosphorylation in the TCA. The beta subunit provides nucleotide specificity of the enzyme and binds the substrate succinate, while the binding sites for coenzyme A and phosphate are found in the alpha subunit. This chain is Succinate--CoA ligase [ADP-forming] subunit beta, found in Shigella boydii serotype 18 (strain CDC 3083-94 / BS512).